A 282-amino-acid chain; its full sequence is 4-hydroxy-3-methylbut-2-enyl diphosphate reductase (282 aa).

[4Fe-4S] cluster is bound at residue Cys-14. His-43 and His-78 together coordinate (2E)-4-hydroxy-3-methylbut-2-enyl diphosphate. Dimethylallyl diphosphate-binding residues include His-43 and His-78. Residues His-43 and His-78 each coordinate isopentenyl diphosphate. Cys-100 serves as a coordination point for [4Fe-4S] cluster. His-128 is a (2E)-4-hydroxy-3-methylbut-2-enyl diphosphate binding site. Residue His-128 participates in dimethylallyl diphosphate binding. His-128 is an isopentenyl diphosphate binding site. Glu-130 serves as the catalytic Proton donor. Residue Thr-164 participates in (2E)-4-hydroxy-3-methylbut-2-enyl diphosphate binding. Cys-192 contributes to the [4Fe-4S] cluster binding site. (2E)-4-hydroxy-3-methylbut-2-enyl diphosphate contacts are provided by Ser-220, Ser-221, Asn-222, and Ser-266. Dimethylallyl diphosphate contacts are provided by Ser-220, Ser-221, Asn-222, and Ser-266. Isopentenyl diphosphate is bound by residues Ser-220, Ser-221, Asn-222, and Ser-266.

This sequence belongs to the IspH family. Requires [4Fe-4S] cluster as cofactor.

It carries out the reaction isopentenyl diphosphate + 2 oxidized [2Fe-2S]-[ferredoxin] + H2O = (2E)-4-hydroxy-3-methylbut-2-enyl diphosphate + 2 reduced [2Fe-2S]-[ferredoxin] + 2 H(+). The catalysed reaction is dimethylallyl diphosphate + 2 oxidized [2Fe-2S]-[ferredoxin] + H2O = (2E)-4-hydroxy-3-methylbut-2-enyl diphosphate + 2 reduced [2Fe-2S]-[ferredoxin] + 2 H(+). It participates in isoprenoid biosynthesis; dimethylallyl diphosphate biosynthesis; dimethylallyl diphosphate from (2E)-4-hydroxy-3-methylbutenyl diphosphate: step 1/1. It functions in the pathway isoprenoid biosynthesis; isopentenyl diphosphate biosynthesis via DXP pathway; isopentenyl diphosphate from 1-deoxy-D-xylulose 5-phosphate: step 6/6. Catalyzes the conversion of 1-hydroxy-2-methyl-2-(E)-butenyl 4-diphosphate (HMBPP) into a mixture of isopentenyl diphosphate (IPP) and dimethylallyl diphosphate (DMAPP). Acts in the terminal step of the DOXP/MEP pathway for isoprenoid precursor biosynthesis. This Clostridium perfringens (strain ATCC 13124 / DSM 756 / JCM 1290 / NCIMB 6125 / NCTC 8237 / Type A) protein is 4-hydroxy-3-methylbut-2-enyl diphosphate reductase.